Consider the following 126-residue polypeptide: C-type natriuretic peptide 2 (126 aa).

An N-terminal signal peptide occupies residues 1–22; that stretch reads MAVCSSSSLILLTVFLSVAVET. Positions 23-102 are excised as a propeptide; sequence RPSSDRDEEQ…REKTRRWGRK (80 aa). Residues 44–80 are disordered; it reads SLILAPPTSNDSTEGSSGSPEPPTPSEAPVLIHGDRG. A disulfide bond links cysteine 110 and cysteine 126.

This sequence belongs to the natriuretic peptide family. As to expression, brain and spinal cord.

The protein resides in the secreted. Exhibits natriuretic and vasodepressant activity. Has cGMP-stimulating activity. May help to regulate body fluid homeostasis in a variety of aquatic environments. The chain is C-type natriuretic peptide 2 from Oryzias latipes (Japanese rice fish).